The sequence spans 442 residues: Decapping and exoribonuclease protein 1 (442 aa).

A compositionally biased stretch (basic and acidic residues) spans 31–40 (QSKLCKEKTT). A disordered region spans residues 31 to 56 (QSKLCKEKTTSDSSSSRKPSQQRDNY). Over residues 41–53 (SDSSSSRKPSQQR) the composition is skewed to low complexity. R101 is a substrate binding site. Residue E255 participates in a divalent metal cation binding. E293 provides a ligand contact to substrate. A divalent metal cation-binding residues include D295, E306, and L307. Residues K308 and Q330 each contribute to the substrate site.

Belongs to the DXO/Dom3Z family. A divalent metal cation is required as a cofactor.

Its subcellular location is the cytoplasm. It carries out the reaction a 5'-end NAD(+)-phospho-ribonucleoside in mRNA + H2O = a 5'-end phospho-ribonucleoside in mRNA + NAD(+) + H(+). The catalysed reaction is a 5'-end (N(7)-methyl 5'-triphosphoguanosine)-ribonucleoside-ribonucleotide in mRNA + H2O = a (N(7)-methyl 5'-triphosphoguanosine)-nucleoside + a 5'-end phospho-ribonucleoside in mRNA + H(+). Its function is as follows. Decapping enzyme for NAD-capped RNAs: specifically hydrolyzes the nicotinamide adenine dinucleotide (NAD) cap from a subset of RNAs by removing the entire NAD moiety from the 5'-end of an NAD-capped RNA. The NAD-cap is present at the 5'-end of some RNAs and snoRNAs. In contrast to the canonical 5'-end N7 methylguanosine (m7G) cap, the NAD cap promotes mRNA decay. Also acts as a non-canonical decapping enzyme that removes the entire cap structure of m7G capped or incompletely capped RNAs. Has decapping activity toward incomplete 5'-end m7G cap mRNAs such as unmethylated 5'-end-capped RNA (cap0), while it has no activity toward 2'-O-ribose methylated m7G cap (cap1). Also has 5'-3' exonuclease activity. The sequence is that of Decapping and exoribonuclease protein 1 (DXO1) from Saccharomyces cerevisiae (strain ATCC 204508 / S288c) (Baker's yeast).